The sequence spans 526 residues: MSQDTEVDMKDVELNELEPEKQPMNAADGAAAGEKNGLVKIKVAEDETEAGVKFTGLSKEELLKVAGSPGWVRTRWALLLLFWLGWLGMLAGAVVIIVRAPRCRELPVQRWWHKGALYRIGDLQAFVGRDAGGIAGLKSHLEYLSTLKVKGLVLGPIHKNQKDEINETDLKQINPTLGSQEDFKDLLQSAKKKSIHIILDLTPNYQGQNAWFLPAQADIVATKMKEALSSWLQDGVDGFQFRDVGKLMNAPLYLAEWQNITKNLSEDRLLIAGTESSDLQQIVNILESTSDLLLTSSYLSNSTFTGERTESLVTRFLNATGSQWCSWSVSQAGLLADFIPDHLLRLYQLLLFTLPGTPVFSYGDELGLQGALPGQPAKAPLMPWNESSIFHIPRPVSLNMTVKGQNEDPGSLLTQFRRLSDLRGKERSLLHGDFHALSSSPDLFSYIRHWDQNERYLVVLNFRDSGRSARLGASNLPAGISLPASAKLLLSTDSARQSREEDTSLKLENLSLNPYEGLLLQFPFVA.

Positions 1–31 (MSQDTEVDMKDVELNELEPEKQPMNAADGAA) are disordered. The Cytoplasmic segment spans residues 1–75 (MSQDTEVDMK…AGSPGWVRTR (75 aa)). S2 bears the Phosphoserine mark. The residue at position 5 (T5) is a Phosphothreonine. Residues 7–21 (VDMKDVELNELEPEK) are compositionally biased toward basic and acidic residues. A Glycyl lysine isopeptide (Lys-Gly) (interchain with G-Cter in ubiquitin) cross-link involves residue K42. S58 bears the Phosphoserine mark. K59 participates in a covalent cross-link: Glycyl lysine isopeptide (Lys-Gly) (interchain with G-Cter in SUMO2). Residues 76–99 (WALLLLFWLGWLGMLAGAVVIIVR) traverse the membrane as a helical; Signal-anchor for type II membrane protein segment. The Extracellular portion of the chain corresponds to 100-526 (APRCRELPVQ…GLLLQFPFVA (427 aa)). N-linked (GlcNAc...) asparagine glycosylation is found at N166, N259, and N263. S300 carries the post-translational modification Phosphoserine. The N-linked (GlcNAc...) asparagine glycan is linked to N301. Residue S302 is modified to Phosphoserine. 3 N-linked (GlcNAc...) asparagine glycosylation sites follow: N318, N385, and N399. A Phosphoserine modification is found at S420. N-linked (GlcNAc...) asparagine glycosylation occurs at N509.

It belongs to the SLC3A transporter family. In terms of assembly, disulfide-linked heterodimer with a non-glycosylated light chain (SLC7A5, SLC7A6, SLC7A7, SLC7A8, SLC7A10 or SLC7A11). Interacts with TLCD3A/CT120 and ICAM1. Constitutively and specifically associates with beta-1 integrins (alpha-2/beta-1, alpha-3/beta-1, alpha-5/beta-1 and alpha-6/beta-1), but minimally with alpha-4/beta-1. Interacts with LAPTM4B; recruits SLC3A2 and SLC7A5 to lysosomes to promote leucine uptake into these organelles and is required for mTORC1 activation. Post-translationally, phosphorylation on Ser-300 or Ser-302 and on Ser-420 by ecto-protein kinases favors heterotypic cell-cell interactions. N-glycosylated; N-glycosylation is crucial for trafficking and stability of SLC3A2 to the plasma membrane. In terms of tissue distribution, detected on the surface of embryonic epithelial cells in the epidermis, thymus, kidney, intestine, brain choroid plexus, and in retina. Detected in adult and embryonic brain, spleen, kidney, intestine and liver, and in adult testis (at protein level). Observed in all adult tissues tested with strongest expression in kidney, small intestine, spleen, thymus and liver. Moderate expression in brain, stomach, heart, testis, lung, skin, pancreas and skeletal muscle. In brain expressed on capillary endothelia in cerebral cortex.

Its subcellular location is the apical cell membrane. The protein localises to the cell membrane. It localises to the cell junction. The protein resides in the lysosome membrane. It is found in the melanosome. Its subcellular location is the basolateral cell membrane. Its function is as follows. Acts as a chaperone that facilitates biogenesis and trafficking of functional transporters heterodimers to the plasma membrane. Forms heterodimer with SLC7 family transporters (SLC7A5, SLC7A6, SLC7A7, SLC7A8, SLC7A10 and SLC7A11), a group of amino-acid antiporters. Heterodimers function as amino acids exchangers, the specificity of the substrate depending on the SLC7A subunit. Heterodimers SLC3A2/SLC7A6 or SLC3A2/SLC7A7 mediate the uptake of dibasic amino acids. Heterodimer SLC3A2/SLC7A11 functions as an antiporter by mediating the exchange of extracellular anionic L-cystine and intracellular L-glutamate across the cellular plasma membrane. SLC3A2/SLC7A10 translocates small neutral L- and D-amino acids across the plasma membrane. SLC3A2/SLC75 or SLC3A2/SLC7A8 translocates neutral amino acids with broad specificity, thyroid hormones and L-DOPA. SLC3A2 is essential for plasma membrane localization, stability, and the transport activity of SLC7A5 and SLC7A8. When associated with LAPTM4B, the heterodimer SLC7A5 is recruited to lysosomes to promote leucine uptake into these organelles, and thereby mediates mTORC1 activation. Modulates integrin-related signaling and is essential for integrin-dependent cell spreading, migration and tumor progression. This Mus musculus (Mouse) protein is Amino acid transporter heavy chain SLC3A2.